Consider the following 187-residue polypeptide: ATP synthase subunit b 2 (187 aa).

Basic and acidic residues predominate over residues 1–12; that stretch reads MAQERAEHESAD. The segment at 1–31 is disordered; sequence MAQERAEHESADQHTTSTGVPHEGQGEPFPP. Residues 40-60 form a helical membrane-spanning segment; it reads LLIWLAISFLLLYALMSKLVL.

Belongs to the ATPase B chain family. F-type ATPases have 2 components, F(1) - the catalytic core - and F(0) - the membrane proton channel. F(1) has five subunits: alpha(3), beta(3), gamma(1), delta(1), epsilon(1). F(0) has three main subunits: a(1), b(2) and c(10-14). The alpha and beta chains form an alternating ring which encloses part of the gamma chain. F(1) is attached to F(0) by a central stalk formed by the gamma and epsilon chains, while a peripheral stalk is formed by the delta and b chains.

The protein resides in the cell inner membrane. In terms of biological role, f(1)F(0) ATP synthase produces ATP from ADP in the presence of a proton or sodium gradient. F-type ATPases consist of two structural domains, F(1) containing the extramembraneous catalytic core and F(0) containing the membrane proton channel, linked together by a central stalk and a peripheral stalk. During catalysis, ATP synthesis in the catalytic domain of F(1) is coupled via a rotary mechanism of the central stalk subunits to proton translocation. Functionally, component of the F(0) channel, it forms part of the peripheral stalk, linking F(1) to F(0). The b'-subunit is a diverged and duplicated form of b found in plants and photosynthetic bacteria. The polypeptide is ATP synthase subunit b 2 (atpF2) (Beijerinckia indica subsp. indica (strain ATCC 9039 / DSM 1715 / NCIMB 8712)).